The following is a 580-amino-acid chain: Tetratricopeptide repeat protein 39C (580 aa).

TPR repeat units lie at residues 312–345, 350–383, and 482–515; these read SLFM…AVDQ, HVCL…SRWS, and GLKH…ELCR.

It belongs to the TTC39 family.

The polypeptide is Tetratricopeptide repeat protein 39C (Ttc39c) (Mus musculus (Mouse)).